We begin with the raw amino-acid sequence, 330 residues long: Palmitoyltransferase SWF1 (330 aa).

The chain crosses the membrane as a helical span at residues 1 to 21; sequence MLLFLVFILVVSQVVLLLLSP. Residues 22-50 lie on the Cytoplasmic side of the membrane; sequence QFRDKFIFRWYYDEVYKPMILDNSRYRIK. The helical transmembrane segment at 51–71 threads the bilayer; that stretch reads FYVVPVFYLSVYSYMVYIFYS. At 72–86 the chain is on the lumenal side; sequence RTFAIISPMLTSIET. A helical membrane pass occupies residues 87 to 107; sequence YVVIPLMLILPLFFGSMSMII. Residues 108–181 are Cytoplasmic-facing; it reads KPDSSNAHQI…GMGNYMYFYS (74 aa). A DHHC domain is found at 134 to 184; sequence HECRTCKQVKPARSKHCTVCNSCIYLADHHCVWINNCVGMGNYMYFYSFLC. Residues 182-202 traverse the membrane as a helical segment; the sequence is FLCSNLLLLSYSFIRLIFIQF. At 203–218 the chain is on the lumenal side; it reads NKSAYNTTPTGEKSLL. Residues 219 to 239 traverse the membrane as a helical segment; that stretch reads ILSILCGSFTVILAVYCYFVF. Residues 240–330 lie on the Cytoplasmic side of the membrane; sequence ELVNSGMTTN…FINNLREFIG (91 aa).

It belongs to the DHHC palmitoyltransferase family. SWF1 subfamily.

The protein localises to the endoplasmic reticulum membrane. It catalyses the reaction L-cysteinyl-[protein] + hexadecanoyl-CoA = S-hexadecanoyl-L-cysteinyl-[protein] + CoA. Its function is as follows. Palmitoyltransferase that targets several endosomal SNAREs. Palmitoylates the SNAREs at cysteine residues close to the cytoplasmic end of their transmembrane domain. May have a role in the cellular quality control of transmembrane domain-containing proteins. This is Palmitoyltransferase SWF1 (SWF1) from Candida glabrata (strain ATCC 2001 / BCRC 20586 / JCM 3761 / NBRC 0622 / NRRL Y-65 / CBS 138) (Yeast).